Reading from the N-terminus, the 328-residue chain is D-cysteine desulfhydrase (328 aa).

An N6-(pyridoxal phosphate)lysine modification is found at Lys-51.

Belongs to the ACC deaminase/D-cysteine desulfhydrase family. As to quaternary structure, homodimer. Pyridoxal 5'-phosphate serves as cofactor.

It carries out the reaction D-cysteine + H2O = hydrogen sulfide + pyruvate + NH4(+) + H(+). Functionally, catalyzes the alpha,beta-elimination reaction of D-cysteine and of several D-cysteine derivatives. It could be a defense mechanism against D-cysteine. The polypeptide is D-cysteine desulfhydrase (Shigella flexneri serotype 5b (strain 8401)).